The chain runs to 356 residues: Protein disulfide isomerase crld-1 (356 aa).

Residues 1 to 17 form the signal peptide; it reads MSRILLLLAVLIGATSQ. The Lumenal segment spans residues 18–299; the sequence is KEVTIKNEKC…DRPFMPIDQQ (282 aa). Positions 27–30 match the CXXC motif; the sequence is CRTC. An intrachain disulfide couples C27 to C30. N122 carries an N-linked (GlcNAc...) asparagine glycan. The EGF-like 1 domain occupies 150-188; sequence GLSEKADVCFGKGSCHGDGSREGSGKCKCETGYTGNLCR. Intrachain disulfides connect C158–C176, C178–C187, C245–C258, C251–C267, and C269–C281. An EGF-like 2; calcium-binding domain is found at 241 to 282; the sequence is DVNECQNESACTKEHEICVNTVGSFKCECKEGYKKDDEQNCQ. N247 carries an N-linked (GlcNAc...) asparagine glycan. The chain crosses the membrane as a helical span at residues 300 to 317; that stretch reads LKLIAFSSLIIIITFVVW. Topologically, residues 318–321 are cytoplasmic; that stretch reads HGSP. A helical transmembrane segment spans residues 322-341; that stretch reads VLYVLTGITIVALILVDLYV. Topologically, residues 342 to 356 are lumenal; sequence NPDTIPDEAKRFLGY.

Belongs to the CRELD family. Interacts with unc-29. As to expression, isoforms a: Widely expressed in tissues including body wall muscles, neurons, pharynx, hypodermis, seam cells, intestine and gonad. Isoform b: Widely expressed in tissues including body wall muscles, neurons, pharynx, hypodermis, seam cells, intestine and gonad.

The protein localises to the endoplasmic reticulum membrane. It is found in the endoplasmic reticulum lumen. The enzyme catalyses Catalyzes the rearrangement of -S-S- bonds in proteins.. Protein disulfide isomerase which associates with the unc-29 subunit of levamisole-sensitive nicotinic acetylcholine receptors (L-nAChR) to promote L-nAChR assembly in the endoplasmic reticulum at neuromuscular junctions. Functionally, promotes L-nAChR assembly in the endoplasmic reticulum at neuromuscular junctions. The chain is Protein disulfide isomerase crld-1 from Caenorhabditis elegans.